The primary structure comprises 255 residues: Phosphoribosylformylglycinamidine synthase subunit PurQ (255 aa).

Positions threonine 6–valine 255 constitute a Glutamine amidotransferase type-1 domain. The Nucleophile role is filled by cysteine 96. Residues histidine 217 and glutamate 219 contribute to the active site.

As to quaternary structure, part of the FGAM synthase complex composed of 1 PurL, 1 PurQ and 2 PurS subunits.

It is found in the cytoplasm. The catalysed reaction is N(2)-formyl-N(1)-(5-phospho-beta-D-ribosyl)glycinamide + L-glutamine + ATP + H2O = 2-formamido-N(1)-(5-O-phospho-beta-D-ribosyl)acetamidine + L-glutamate + ADP + phosphate + H(+). It catalyses the reaction L-glutamine + H2O = L-glutamate + NH4(+). It functions in the pathway purine metabolism; IMP biosynthesis via de novo pathway; 5-amino-1-(5-phospho-D-ribosyl)imidazole from N(2)-formyl-N(1)-(5-phospho-D-ribosyl)glycinamide: step 1/2. Functionally, part of the phosphoribosylformylglycinamidine synthase complex involved in the purines biosynthetic pathway. Catalyzes the ATP-dependent conversion of formylglycinamide ribonucleotide (FGAR) and glutamine to yield formylglycinamidine ribonucleotide (FGAM) and glutamate. The FGAM synthase complex is composed of three subunits. PurQ produces an ammonia molecule by converting glutamine to glutamate. PurL transfers the ammonia molecule to FGAR to form FGAM in an ATP-dependent manner. PurS interacts with PurQ and PurL and is thought to assist in the transfer of the ammonia molecule from PurQ to PurL. The chain is Phosphoribosylformylglycinamidine synthase subunit PurQ from Dehalococcoides mccartyi (strain ATCC BAA-2266 / KCTC 15142 / 195) (Dehalococcoides ethenogenes (strain 195)).